Here is a 211-residue protein sequence, read N- to C-terminus: Receptor expression-enhancing protein 6 (211 aa).

The next 2 membrane-spanning stretches (helical) occupy residues 44 to 64 (LSLY…IGFV) and 89 to 109 (WVVY…LSWF). The interval 190-211 (AGPSTPLEADLKPSQTPQPKDK) is disordered. The segment covering 202-211 (PSQTPQPKDK) has biased composition (polar residues).

This sequence belongs to the DP1 family. Interacts with STX3. Interacts with clathrin. As to expression, expressed in circumvallate papillae and testis. Expressed in the retina. Isoform 1 is predominantly present in mature optic cups. Isoform 1 expression is confined to the cell body and inner segment of developing rod photoreceptor cells.

The protein resides in the endoplasmic reticulum membrane. Its subcellular location is the cytoplasmic vesicle. It localises to the clathrin-coated vesicle membrane. Its function is as follows. Required for correct function and survival of retinal photoreceptors. Required for retinal development. In rod photoreceptors, facilitates stability and/or trafficking of guanylate cyclases and is required to maintain endoplasmic reticulum and mitochondrial homeostasis. May play a role in clathrin-coated intracellular vesicle trafficking of proteins from the endoplasmic reticulum to the retinal rod plasma membrane. This Homo sapiens (Human) protein is Receptor expression-enhancing protein 6 (REEP6).